A 429-amino-acid polypeptide reads, in one-letter code: Nucleotide exchange factor Sil1 (429 aa).

An N-terminal signal peptide occupies residues 1–24 (MSGKQVVILLGSVLILGCLQVAAA). Asn-29 carries an N-linked (GlcNAc...) asparagine glycan. Residues 70 to 98 (DESERGTSLQSQPDDQNARESHDDNEPLA) form a disordered region. The segment covering 75 to 84 (GTSLQSQPDD) has biased composition (polar residues). Over residues 85–94 (QNARESHDDN) the composition is skewed to basic and acidic residues. Residues 104–135 (DIIEESIRRVKEQKKSYAELRKAYKEFQKNFR) adopt a coiled-coil conformation. N-linked (GlcNAc...) asparagine glycosylation is found at Asn-150, Asn-199, and Asn-400. The Prevents secretion from ER motif lies at 426 to 429 (HTEL).

Belongs to the SIL1 family.

The protein resides in the endoplasmic reticulum lumen. Required for protein translocation and folding in the endoplasmic reticulum (ER). Functions as a nucleotide exchange factor for an ER lumenal chaperone of HSP70 family. The sequence is that of Nucleotide exchange factor Sil1 from Drosophila melanogaster (Fruit fly).